The following is a 1078-amino-acid chain: Rho family-interacting cell polarization regulator 2 (1078 aa).

2 positions are modified to phosphoserine: Ser46 and Ser62. The involved in cell filopodia formation stretch occupies residues 80 to 138 (MHNLGHKNNNTPKEPQPKRVEEVYRALKNGLDEYLEFHQTELDKLTAQLKDMKRNSRLG). A coiled-coil region spans residues 108–137 (NGLDEYLEFHQTELDKLTAQLKDMKRNSRL). The residue at position 366 (Ser366) is a Phosphoserine. A compositionally biased stretch (polar residues) spans 488-508 (SSLSSQNEGTEDSSSASSRNS). The disordered stretch occupies residues 488–534 (SSLSSQNEGTEDSSSASSRNSLGEDHEPKSHPKSDTVEPGKPGVATR). Residues 509–525 (LGEDHEPKSHPKSDTVE) show a composition bias toward basic and acidic residues. At Ser582 the chain carries Phosphoserine.

This sequence belongs to the RIPOR family. As to quaternary structure, homooligomer; homooligomerization is regulated by RHOC and leads to the formation of concatemers through the association of N- and C-termini. Interacts (phosphorylated form) with 14-3-3 proteins; these interactions occur during myogenic cell differentiation and also induces T cell proliferation arrest. Interacts (phosphorylated form) with HDAC6; this interaction occurs during early myogenic differentiation, prevents HDAC6 to deacetylate tubulin and also induces T cell proliferation arrest. Interacts with DYSF; this interaction occurs during early myogenic differentiation. Interacts with MYOF. Interacts (via active GTP- or inactive GDP-bound forms) with RHOA; this interaction is direct, blocks the loading of GTP to RHOA and decreases upon chemokine CCL19 stimulation in primary T lymphocytes. Interacts with RHOC. Interacts (via phosphorylated form) with YWHAB; this interaction occurs in a chemokine-dependent manner and does not compete for binding of RIPOR2 with RHOA nor blocks inhibition of RIPOR2-mediated RHOA activity. Interacts with YWHAE. Interacts with YWHAQ. Post-translationally, phosphorylated. Chemokine-induced phosphorylation in neutrophils occurs in a PKC- and AKT-dependent manner, resulting in RIPOR2 interaction with YWHAB and stabilization. Phosphorylated by PKCA, AKT1 and MAPKAPK1A; in vitro. As to expression, expressed in the cochlea. Expressed in inner hair cells and outer hair cells and Hensen's cells (at protein level). Expressed in the brain, cerebellum, spinal cord, retina, heart, spleen liver, kidney, bladder, muscle and lung. Expressed in the cochlea of the inner ear.

The protein resides in the cytoplasm. Its subcellular location is the cytoskeleton. It is found in the cell projection. It localises to the filopodium. The protein localises to the stereocilium. The protein resides in the stereocilium membrane. Its subcellular location is the apical cell membrane. In terms of biological role, acts as an inhibitor of the small GTPase RHOA and plays several roles in the regulation of myoblast and hair cell differentiation, lymphocyte T proliferation and neutrophil polarization. Plays a role in fetal mononuclear myoblast differentiation by promoting filopodia and myotube formation. Maintains naive T lymphocytes in a quiescent state and prevents chemokine-induced T lymphocyte responses, such as cell adhesion, polarization and migration. Involved also in the regulation of neutrophil polarization, chemotaxis and adhesion. Required for normal development of inner and outer hair cell stereocilia within the cochlea of the inner ear. Plays a role for maintaining the structural organization of the basal domain of stereocilia. Involved in mechanosensory hair cell function. Required for normal hearing. The chain is Rho family-interacting cell polarization regulator 2 from Mus musculus (Mouse).